We begin with the raw amino-acid sequence, 75 residues long: Probable pilin MJ0431 (75 aa).

Positions M1–G15 are excised as a propeptide. The short motif at Q16–L24 is the QXSXEXXXL element.

In terms of processing, the N-terminus is cleaved by the prepilin peptidase EppA, which recognizes the class III signal sequence.

The protein resides in the secreted. It localises to the cell surface. Its subcellular location is the fimbrium. The protein is Probable pilin MJ0431 of Methanocaldococcus jannaschii (strain ATCC 43067 / DSM 2661 / JAL-1 / JCM 10045 / NBRC 100440) (Methanococcus jannaschii).